A 154-amino-acid chain; its full sequence is Myoglobin (154 aa).

The Globin domain occupies 2–148; it reads GLSDGEWQSV…FRNDIAAKYK (147 aa). Phosphoserine is present on Ser4. His65 contributes to the nitrite binding site. Residue His65 participates in O2 binding. Thr68 is modified (phosphothreonine). His94 provides a ligand contact to heme b.

It belongs to the globin family. In terms of assembly, monomeric.

Its subcellular location is the cytoplasm. It localises to the sarcoplasm. It catalyses the reaction Fe(III)-heme b-[protein] + nitric oxide + H2O = Fe(II)-heme b-[protein] + nitrite + 2 H(+). The catalysed reaction is H2O2 + AH2 = A + 2 H2O. In terms of biological role, monomeric heme protein which primary function is to store oxygen and facilitate its diffusion within muscle tissues. Reversibly binds oxygen through a pentacoordinated heme iron and enables its timely and efficient release as needed during periods of heightened demand. Depending on the oxidative conditions of tissues and cells, and in addition to its ability to bind oxygen, it also has a nitrite reductase activity whereby it regulates the production of bioactive nitric oxide. Under stress conditions, like hypoxia and anoxia, it also protects cells against reactive oxygen species thanks to its pseudoperoxidase activity. The chain is Myoglobin (MB) from Perodicticus potto edwarsi (Potto).